The following is a 167-amino-acid chain: Large ribosomal subunit protein bL9 (167 aa).

This sequence belongs to the bacterial ribosomal protein bL9 family.

In terms of biological role, binds to the 23S rRNA. The chain is Large ribosomal subunit protein bL9 from Chlamydia muridarum (strain MoPn / Nigg).